A 570-amino-acid polypeptide reads, in one-letter code: Repressible high-affinity phosphate permease (570 aa).

The Cytoplasmic segment spans residues methionine 1–aspartate 61. The helical transmembrane segment at serine 62–glycine 82 threads the bilayer. The Extracellular segment spans residues glutamate 83–lysine 95. Residues leucine 96 to phenylalanine 116 form a helical membrane-spanning segment. The Cytoplasmic portion of the chain corresponds to glycine 117–serine 120. Residues methionine 121–glycine 141 traverse the membrane as a helical segment. Topologically, residues serine 142–proline 143 are extracellular. A helical transmembrane segment spans residues serine 144 to glycine 164. At aspartate 165–methionine 186 the chain is on the cytoplasmic side. A helical transmembrane segment spans residues glycine 187–valine 207. Residues threonine 208 to arginine 237 lie on the Extracellular side of the membrane. A helical transmembrane segment spans residues threonine 238–proline 258. At glutamate 259–asparagine 325 the chain is on the cytoplasmic side. Residues alanine 326 to valine 346 form a helical membrane-spanning segment. The Extracellular portion of the chain corresponds to serine 347–threonine 374. Residues alanine 375–phenylalanine 395 traverse the membrane as a helical segment. Residues threonine 396–lysine 403 are Cytoplasmic-facing. Residues proline 404 to tyrosine 424 traverse the membrane as a helical segment. The Extracellular portion of the chain corresponds to lysine 425 to leucine 433. The chain crosses the membrane as a helical span at residues alanine 434 to valine 454. The Cytoplasmic segment spans residues proline 455 to histidine 468. A helical transmembrane segment spans residues glycine 469 to leucine 489. At arginine 490–asparagine 505 the chain is on the extracellular side. Residues histidine 506–proline 526 traverse the membrane as a helical segment. The Cytoplasmic segment spans residues glutamate 527–alanine 570. The segment covering serine 537–glutamate 546 has biased composition (acidic residues). Residues serine 537–alanine 570 form a disordered region. Over residues glutamate 547–glutamate 560 the composition is skewed to basic and acidic residues. Residues alanine 561–alanine 570 show a composition bias toward polar residues.

The protein belongs to the major facilitator superfamily. Sugar transporter (TC 2.A.1.1) family.

The protein resides in the cell membrane. With respect to regulation, phosphate transport activity is competitively inhibited by arsenate. Functionally, high-affinity transporter for external inorganic phosphate. Acts probably as a H(+)-phosphate symporter. This chain is Repressible high-affinity phosphate permease, found in Neurospora crassa (strain ATCC 24698 / 74-OR23-1A / CBS 708.71 / DSM 1257 / FGSC 987).